The primary structure comprises 100 residues: Small ribosomal subunit protein uS14c (100 aa).

It belongs to the universal ribosomal protein uS14 family. In terms of assembly, part of the 30S ribosomal subunit.

The protein localises to the plastid. It is found in the chloroplast. Binds 16S rRNA, required for the assembly of 30S particles. This chain is Small ribosomal subunit protein uS14c, found in Nephroselmis olivacea (Green alga).